Here is a 216-residue protein sequence, read N- to C-terminus: Probable GTP-binding protein EngB (216 aa).

The region spanning 30–204 (SGLEVAFAGR…QMVLAGWLDL (175 aa)) is the EngB-type G domain. GTP-binding positions include 38–45 (GRSNAGKS), 64–68 (GRTQL), 82–85 (DLPG), 149–152 (TKAD), and 182–185 (LFSA). Positions 45 and 66 each coordinate Mg(2+).

This sequence belongs to the TRAFAC class TrmE-Era-EngA-EngB-Septin-like GTPase superfamily. EngB GTPase family. Requires Mg(2+) as cofactor.

Necessary for normal cell division and for the maintenance of normal septation. This chain is Probable GTP-binding protein EngB, found in Ectopseudomonas mendocina (strain ymp) (Pseudomonas mendocina).